Consider the following 226-residue polypeptide: V-type proton ATPase subunit E 1 (226 aa).

An N-acetylalanine modification is found at alanine 2. Tyrosine 56 carries the post-translational modification Phosphotyrosine.

This sequence belongs to the V-ATPase E subunit family. In terms of assembly, V-ATPase is a heteromultimeric enzyme made up of two complexes: the ATP-hydrolytic V1 complex and the proton translocation V0 complex. The V1 complex consists of three catalytic AB heterodimers that form a heterohexamer, three peripheral stalks each consisting of EG heterodimers, one central rotor including subunits D and F, and the regulatory subunits C and H. The proton translocation complex V0 consists of the proton transport subunit a, a ring of proteolipid subunits c9c'', rotary subunit d, subunits e and f, and the accessory subunits ATP6AP1/Ac45 and ATP6AP2/PRR. Interacts with RABL2/RABL2A; binds preferentially to GTP-bound RABL2. Interacts with ALDOC. Interacts with RAB11B. In terms of tissue distribution, kidney; localizes to early distal nephron, encompassing thick ascending limbs and distal convoluted tubules (at protein level). Ubiquitous. High expression in the skin.

The protein resides in the apical cell membrane. The protein localises to the cytoplasmic vesicle. It localises to the secretory vesicle. Its subcellular location is the synaptic vesicle membrane. It is found in the clathrin-coated vesicle membrane. Subunit of the V1 complex of vacuolar(H+)-ATPase (V-ATPase), a multisubunit enzyme composed of a peripheral complex (V1) that hydrolyzes ATP and a membrane integral complex (V0) that translocates protons. V-ATPase is responsible for acidifying and maintaining the pH of intracellular compartments and in some cell types, is targeted to the plasma membrane, where it is responsible for acidifying the extracellular environment. This chain is V-type proton ATPase subunit E 1 (ATP6V1E1), found in Homo sapiens (Human).